We begin with the raw amino-acid sequence, 294 residues long: tRNA dimethylallyltransferase (294 aa).

Residue 9 to 16 (GPTASGKS) participates in ATP binding. Residue 11 to 16 (TASGKS) participates in substrate binding. An interaction with substrate tRNA region spans residues 155–159 (QRVIR).

It belongs to the IPP transferase family. Monomer. The cofactor is Mg(2+).

The enzyme catalyses adenosine(37) in tRNA + dimethylallyl diphosphate = N(6)-dimethylallyladenosine(37) in tRNA + diphosphate. Its function is as follows. Catalyzes the transfer of a dimethylallyl group onto the adenine at position 37 in tRNAs that read codons beginning with uridine, leading to the formation of N6-(dimethylallyl)adenosine (i(6)A). The sequence is that of tRNA dimethylallyltransferase from Leuconostoc citreum (strain KM20).